A 429-amino-acid polypeptide reads, in one-letter code: Enolase (429 aa).

Glutamine 163 provides a ligand contact to (2R)-2-phosphoglycerate. The active-site Proton donor is the glutamate 205. Mg(2+)-binding residues include aspartate 242, glutamate 287, and aspartate 314. 4 residues coordinate (2R)-2-phosphoglycerate: lysine 339, arginine 368, serine 369, and lysine 390. The active-site Proton acceptor is lysine 339.

The protein belongs to the enolase family. Mg(2+) serves as cofactor.

Its subcellular location is the cytoplasm. The protein resides in the secreted. It localises to the cell surface. It catalyses the reaction (2R)-2-phosphoglycerate = phosphoenolpyruvate + H2O. Its pathway is carbohydrate degradation; glycolysis; pyruvate from D-glyceraldehyde 3-phosphate: step 4/5. Functionally, catalyzes the reversible conversion of 2-phosphoglycerate (2-PG) into phosphoenolpyruvate (PEP). It is essential for the degradation of carbohydrates via glycolysis. The protein is Enolase of Anaeromyxobacter dehalogenans (strain 2CP-C).